A 111-amino-acid polypeptide reads, in one-letter code: Aspartate 1-decarboxylase (111 aa).

Residue serine 25 is the Schiff-base intermediate with substrate; via pyruvic acid of the active site. Serine 25 carries the pyruvic acid (Ser) modification. Threonine 57 provides a ligand contact to substrate. The active-site Proton donor is tyrosine 58. 73-75 (GPA) lines the substrate pocket.

The protein belongs to the PanD family. In terms of assembly, heterooctamer of four alpha and four beta subunits. Pyruvate serves as cofactor. In terms of processing, is synthesized initially as an inactive proenzyme, which is activated by self-cleavage at a specific serine bond to produce a beta-subunit with a hydroxyl group at its C-terminus and an alpha-subunit with a pyruvoyl group at its N-terminus.

The protein resides in the cytoplasm. It catalyses the reaction L-aspartate + H(+) = beta-alanine + CO2. It functions in the pathway cofactor biosynthesis; (R)-pantothenate biosynthesis; beta-alanine from L-aspartate: step 1/1. In terms of biological role, catalyzes the pyruvoyl-dependent decarboxylation of aspartate to produce beta-alanine. The sequence is that of Aspartate 1-decarboxylase from Coxiella burnetii (strain RSA 493 / Nine Mile phase I).